We begin with the raw amino-acid sequence, 316 residues long: Methionyl-tRNA formyltransferase (316 aa).

Residue S110 to P113 coordinates (6S)-5,6,7,8-tetrahydrofolate.

This sequence belongs to the Fmt family.

The enzyme catalyses L-methionyl-tRNA(fMet) + (6R)-10-formyltetrahydrofolate = N-formyl-L-methionyl-tRNA(fMet) + (6S)-5,6,7,8-tetrahydrofolate + H(+). Functionally, attaches a formyl group to the free amino group of methionyl-tRNA(fMet). The formyl group appears to play a dual role in the initiator identity of N-formylmethionyl-tRNA by promoting its recognition by IF2 and preventing the misappropriation of this tRNA by the elongation apparatus. This chain is Methionyl-tRNA formyltransferase, found in Halothermothrix orenii (strain H 168 / OCM 544 / DSM 9562).